The chain runs to 642 residues: Threonine--tRNA ligase (642 aa).

Residues 1–61 (MPVITLPDGS…DADATVAIIT (61 aa)) form the TGS domain. The catalytic stretch occupies residues 243 to 534 (DHRKIGKQLD…LTEEFAGFFP (292 aa)). Zn(2+) contacts are provided by C334, H385, and H511.

Belongs to the class-II aminoacyl-tRNA synthetase family. As to quaternary structure, homodimer. Zn(2+) serves as cofactor.

It is found in the cytoplasm. The catalysed reaction is tRNA(Thr) + L-threonine + ATP = L-threonyl-tRNA(Thr) + AMP + diphosphate + H(+). In terms of biological role, catalyzes the attachment of threonine to tRNA(Thr) in a two-step reaction: L-threonine is first activated by ATP to form Thr-AMP and then transferred to the acceptor end of tRNA(Thr). Also edits incorrectly charged L-seryl-tRNA(Thr). This Edwardsiella ictaluri (strain 93-146) protein is Threonine--tRNA ligase.